A 312-amino-acid chain; its full sequence is Olfactory receptor 10D3 (312 aa).

The Extracellular portion of the chain corresponds to 1–26; the sequence is MEIKNCSVVTEFILLGIPHTEGFETL. N-linked (GlcNAc...) asparagine glycosylation occurs at N5. The helical transmembrane segment at 27-47 threads the bilayer; it reads LFVLFLPFYACTLVGNVSILV. At 48 to 57 the chain is on the cytoplasmic side; that stretch reads AVISSTRLHT. Residues 58 to 78 traverse the membrane as a helical segment; it reads PMYFFLGNLSVFDMGFSSVTC. Residues 79–97 lie on the Extracellular side of the membrane; the sequence is PKMLFYLMGLSRLISYQDC. Cysteines 97 and 179 form a disulfide. A helical transmembrane segment spans residues 98–118; the sequence is VSQLFFFHFLGSIECFLYTVM. The Cytoplasmic portion of the chain corresponds to 119 to 139; it reads AYDRFAAICHPLRYSVIMNSK. The chain crosses the membrane as a helical span at residues 140 to 160; it reads ICVALAVGTWLLGCFHSSVLT. Over 161 to 197 the chain is Extracellular; it reads SLTFTLPYCGPNEVDHFFCDIPAILPLASADTSLAQR. The helical transmembrane segment at 198-218 threads the bilayer; that stretch reads VSFTNVGLVSLVCFLLILLSY. Residues 219–239 lie on the Cytoplasmic side of the membrane; that stretch reads TRITISILSIQSTEGRQRAFS. A helical membrane pass occupies residues 240–260; it reads TCSAHLIAILCAYGPIITIYL. Residues 261–266 lie on the Extracellular side of the membrane; the sequence is QPTPNP. Residues 267–287 form a helical membrane-spanning segment; the sequence is MLGTVVQILMNLVGPMLNPLI. Topologically, residues 288–312 are cytoplasmic; that stretch reads YTLRNKEVKIALKKILHGKGSVSEG.

Belongs to the G-protein coupled receptor 1 family.

It is found in the cell membrane. In terms of biological role, potential odorant receptor. The protein is Olfactory receptor 10D3 of Mus musculus (Mouse).